Consider the following 227-residue polypeptide: Lipoprotein-releasing system ATP-binding protein LolD (227 aa).

The region spanning 7-227 is the ABC transporter domain; sequence LSCRDLGKSY…HLQEGHLVAI (221 aa). 43–50 is an ATP binding site; sequence GTSGSGKS.

The protein belongs to the ABC transporter superfamily. Lipoprotein translocase (TC 3.A.1.125) family. The complex is composed of two ATP-binding proteins (LolD) and two transmembrane proteins (LolC and LolE).

Its subcellular location is the cell inner membrane. Its function is as follows. Part of the ABC transporter complex LolCDE involved in the translocation of mature outer membrane-directed lipoproteins, from the inner membrane to the periplasmic chaperone, LolA. Responsible for the formation of the LolA-lipoprotein complex in an ATP-dependent manner. The chain is Lipoprotein-releasing system ATP-binding protein LolD from Pseudomonas fluorescens (strain ATCC BAA-477 / NRRL B-23932 / Pf-5).